Here is a 122-residue protein sequence, read N- to C-terminus: Large ribosomal subunit protein uL14 (122 aa).

It belongs to the universal ribosomal protein uL14 family. In terms of assembly, part of the 50S ribosomal subunit. Forms a cluster with proteins L3 and L19. In the 70S ribosome, L14 and L19 interact and together make contacts with the 16S rRNA in bridges B5 and B8.

Its function is as follows. Binds to 23S rRNA. Forms part of two intersubunit bridges in the 70S ribosome. This Maridesulfovibrio salexigens (strain ATCC 14822 / DSM 2638 / NCIMB 8403 / VKM B-1763) (Desulfovibrio salexigens) protein is Large ribosomal subunit protein uL14.